The sequence spans 320 residues: ATP-dependent 6-phosphofructokinase (320 aa).

ATP is bound at residue Gly12. Residue 22–26 (RGVVR) participates in ADP binding. ATP is bound by residues 73–74 (RF) and 103–106 (GDGS). Residue Asp104 participates in Mg(2+) binding. A substrate-binding site is contributed by 126 to 128 (TID). Residue Asp128 is the Proton acceptor of the active site. Arg155 is a binding site for ADP. Substrate-binding positions include Arg163 and 170–172 (MGR). Residues 186-188 (GCE), Lys212, and 214-216 (KKH) each bind ADP. Substrate-binding positions include Glu223, Arg244, and 250-253 (HIQR).

This sequence belongs to the phosphofructokinase type A (PFKA) family. ATP-dependent PFK group I subfamily. Prokaryotic clade 'B1' sub-subfamily. In terms of assembly, homotetramer. Mg(2+) serves as cofactor.

The protein localises to the cytoplasm. It carries out the reaction beta-D-fructose 6-phosphate + ATP = beta-D-fructose 1,6-bisphosphate + ADP + H(+). It participates in carbohydrate degradation; glycolysis; D-glyceraldehyde 3-phosphate and glycerone phosphate from D-glucose: step 3/4. Its activity is regulated as follows. Allosterically activated by ADP and other diphosphonucleosides, and allosterically inhibited by phosphoenolpyruvate. In terms of biological role, catalyzes the phosphorylation of D-fructose 6-phosphate to fructose 1,6-bisphosphate by ATP, the first committing step of glycolysis. The protein is ATP-dependent 6-phosphofructokinase of Edwardsiella ictaluri (strain 93-146).